We begin with the raw amino-acid sequence, 605 residues long: Condensin-2 complex subunit H2 (605 aa).

Phosphothreonine is present on T19. Residues S95, S200, S208, S228, and S232 each carry the phosphoserine modification. A disordered region spans residues 194 to 331 (LEPEGMSPME…PFDSLESKPF (138 aa)). Residues 256–266 (GEDEDAEEAVE) are compositionally biased toward acidic residues. S282, S284, S466, and S492 each carry phosphoserine.

The protein belongs to the CND2 H2 (condensin-2 subunit 2) family. Component of the condensin-2 complex, which contains the SMC2 and SMC4 heterodimer, and three non SMC subunits, NCAPG2, NCAPH2 and NCAPD3 that probably regulate the complex.

Its subcellular location is the nucleus. The protein resides in the chromosome. In terms of biological role, regulatory subunit of the condensin-2 complex, a complex that seems to provide chromosomes with an additional level of organization and rigidity and in establishing mitotic chromosome architecture. May promote the resolution of double-strand DNA catenanes (intertwines) between sister chromatids. Condensin-mediated compaction likely increases tension in catenated sister chromatids, providing directionality for type II topoisomerase-mediated strand exchanges toward chromatid decatenation. Required for decatenation of chromatin bridges at anaphase. Early in neurogenesis, may play an essential role to ensure accurate mitotic chromosome condensation in neuron stem cells, ultimately affecting neuron pool and cortex size. Seems to have lineage-specific role in T-cell development. The sequence is that of Condensin-2 complex subunit H2 (NCAPH2) from Homo sapiens (Human).